Consider the following 233-residue polypeptide: Orotidine 5'-phosphate decarboxylase (233 aa).

Residues aspartate 13, lysine 35, 62–71, threonine 122, arginine 182, glutamine 191, glycine 211, and arginine 212 contribute to the substrate site; that span reads DLKFHDIPNT. Lysine 64 acts as the Proton donor in catalysis.

Belongs to the OMP decarboxylase family. Type 1 subfamily. Homodimer.

It catalyses the reaction orotidine 5'-phosphate + H(+) = UMP + CO2. It participates in pyrimidine metabolism; UMP biosynthesis via de novo pathway; UMP from orotate: step 2/2. Functionally, catalyzes the decarboxylation of orotidine 5'-monophosphate (OMP) to uridine 5'-monophosphate (UMP). The polypeptide is Orotidine 5'-phosphate decarboxylase (Pseudomonas putida (strain W619)).